The sequence spans 315 residues: uncharacterized protein (315 aa).

Coiled coils occupy residues 184–212 and 238–275; these read AGEE…TPEQ and EEHR…YKEK.

This sequence belongs to the IIV-6 287R family.

This is an uncharacterized protein from Acheta domesticus (House cricket).